Consider the following 1103-residue polypeptide: Ubiquitin carboxyl-terminal hydrolase 7 (1103 aa).

Positions 1-11 (MNHQQQQQQQQ) are enriched in low complexity. Residues 1-40 (MNHQQQQQQQQKAGEQQLSEPEDMEMEAGDTDDPPRITQN) are disordered. Positions 1-209 (MNHQQQQQQQ…APHGVAWDSK (209 aa)) are interaction with TSPYL5. S19 carries the post-translational modification Phosphoserine. Residues 20–32 (EPEDMEMEAGDTD) show a composition bias toward acidic residues. A phosphoserine mark is found at S50 and S54. The interaction with p53/TP53 and MDM2 stretch occupies residues 54-209 (SNAEEDMEDD…APHGVAWDSK (156 aa)). The MATH domain maps to 69–196 (EATFQFTVER…DDKVTFEVFV (128 aa)). The necessary for nuclear localization stretch occupies residues 71-206 (TFQFTVERFS…QADAPHGVAW (136 aa)). Positions 215-522 (VGLKNQGATC…NAYMLVYIRE (308 aa)) constitute a USP domain. Residue C224 is the Nucleophile of the active site. H465 serves as the catalytic Proton acceptor. Residue K870 is modified to N6-acetyllysine; alternate. K870 is covalently cross-linked (Glycyl lysine isopeptide (Lys-Gly) (interchain with G-Cter in SUMO2); alternate). K870 is covalently cross-linked (Glycyl lysine isopeptide (Lys-Gly) (interchain with G-Cter in ubiquitin); alternate). K883 participates in a covalent cross-link: Glycyl lysine isopeptide (Lys-Gly) (interchain with G-Cter in SUMO2). A Phosphoserine modification is found at S964. An N6-acetyllysine mark is found at K1085 and K1097.

This sequence belongs to the peptidase C19 family. As to quaternary structure, monomer. Homodimer. Part of a complex with DAXX, MDM2, RASSF1 and USP7. Part of a complex with DAXX, MDM2 and USP7. Interacts with MDM2; the interaction is independent of p53/TP53. Interacts with DAXX; the interaction is direct and independent of MDM2 and p53/TP53. Component of a complex composed of KMT2E, OGT and USP7; the complex stabilizes KMT2E, preventing KMT2E ubiquitination and proteasomal-mediated degradation. Interacts (via MATH domain) with KMT2E. Interacts with OGT. Interacts with FOXO4; the interaction is enhanced in presence of hydrogen peroxide and occurs independently of p53/TP53. Interacts with p53/TP53; the interaction is enhanced in response to DNA damage; the interaction is impaired by TSPYL5. Interacts with PTEN; the interaction is direct. Interacts with ATXN1 and the strength of interaction is influenced by the length of the poly-Gln region in ATXN1. A weaker interaction seen with mutants having longer poly-Gln regions. Interacts with KIAA1530/UVSSA. Interacts with MEX3C and antagonizes its ability to degrade mRNA. Interacts with DNMT1 and UHRF1. Interacts with FOXP3. Interacts (via MATH domain) with RNF220. Associated component of the Polycomb group (PcG) multiprotein PRC1-like complex. Interacts with EPOP. Interacts with OTUD4 and USP9X; the interaction is direct. Interacts with CRY2. Interacts with REST. Interacts with ERCC6. Part of a complex consisting of USP7, MAGEL2 and TRIM27; directly interacts with MAGEL2; directly interacts with TRIM27. Polyneddylated. Post-translationally, not sumoylated. In terms of processing, ubiquitinated at Lys-870. Polyubiquitinated. In terms of tissue distribution, strongly expressed in the testis, spleen and brain. Weakly expressed in the stomach, small intestine, skeletal muscle and uterus.

The protein localises to the nucleus. It localises to the cytoplasm. The protein resides in the PML body. It is found in the chromosome. The enzyme catalyses Thiol-dependent hydrolysis of ester, thioester, amide, peptide and isopeptide bonds formed by the C-terminal Gly of ubiquitin (a 76-residue protein attached to proteins as an intracellular targeting signal).. Functionally, hydrolase that deubiquitinates target proteins such as ARMC5, FOXO4, DEPTOR, KAT5, p53/TP53, MDM2, ERCC6, DNMT1, UHRF1, PTEN, KMT2E/MLL5 and DAXX. Together with DAXX, prevents MDM2 self-ubiquitination and enhances the E3 ligase activity of MDM2 towards p53/TP53, thereby promoting p53/TP53 ubiquitination and proteasomal degradation. Deubiquitinates p53/TP53, preventing degradation of p53/TP53, and enhances p53/TP53-dependent transcription regulation, cell growth repression and apoptosis. Deubiquitinates p53/TP53 and MDM2 and strongly stabilizes p53/TP53 even in the presence of excess MDM2, and also induces p53/TP53-dependent cell growth repression and apoptosis. Deubiquitination of FOXO4 in presence of hydrogen peroxide is not dependent on p53/TP53 and inhibits FOXO4-induced transcriptional activity. In association with DAXX, is involved in the deubiquitination and translocation of PTEN from the nucleus to the cytoplasm, both processes that are counteracted by PML. Deubiquitinates KMT2E preventing KMT2E proteasomal-mediated degradation. Involved in cell proliferation during early embryonic development. Involved in transcription-coupled nucleotide excision repair (TC-NER) in response to UV damage: recruited to DNA damage sites following interaction with KIAA1530/UVSSA and promotes deubiquitination of ERCC6, preventing UV-induced degradation of ERCC6. Involved in maintenance of DNA methylation via its interaction with UHRF1 and DNMT1: acts by mediating deubiquitination of UHRF1 and DNMT1, preventing their degradation and promoting DNA methylation by DNMT1. Deubiquitinates alkylation repair enzyme ALKBH3. OTUD4 recruits USP7 and USP9X to stabilize ALKBH3, thereby promoting the repair of alkylated DNA lesions. Acts as a chromatin regulator via its association with the Polycomb group (PcG) multiprotein PRC1-like complex; may act by deubiquitinating components of the PRC1-like complex. Able to mediate deubiquitination of histone H2B; it is however unsure whether this activity takes place in vivo. Exhibits a preference towards 'Lys-48'-linked ubiquitin chains. Increases regulatory T-cells (Treg) suppressive capacity by deubiquitinating and stabilizing transcription factor FOXP3 which is crucial for Treg cell function. Plays a role in the maintenance of the circadian clock periodicity via deubiquitination and stabilization of the CRY1 and CRY2 proteins. Deubiquitinates REST, thereby stabilizing REST and promoting the maintenance of neural progenitor cells. Deubiquitinates SIRT7, inhibiting SIRT7 histone deacetylase activity and regulating gluconeogenesis. Involved in the regulation of WASH-dependent actin polymerization at the surface of endosomes and the regulation of endosomal protein recycling. It maintains optimal WASH complex activity and precise F-actin levels via deubiquitination of TRIM27 and WASHC1. Mediates the deubiquitination of phosphorylated DEPTOR, promoting its stability and leading to decreased mTORC1 signaling. The protein is Ubiquitin carboxyl-terminal hydrolase 7 (Usp7) of Rattus norvegicus (Rat).